The following is a 365-amino-acid chain: 3-dehydroquinate synthase (365 aa).

NAD(+)-binding positions include 95–99, 119–120, K132, and K141; these read GVVGD and TT. Zn(2+)-binding residues include E174, H238, and H255.

This sequence belongs to the sugar phosphate cyclases superfamily. Dehydroquinate synthase family. The cofactor is Co(2+). Requires Zn(2+) as cofactor. It depends on NAD(+) as a cofactor.

The protein localises to the cytoplasm. It catalyses the reaction 7-phospho-2-dehydro-3-deoxy-D-arabino-heptonate = 3-dehydroquinate + phosphate. The protein operates within metabolic intermediate biosynthesis; chorismate biosynthesis; chorismate from D-erythrose 4-phosphate and phosphoenolpyruvate: step 2/7. Its function is as follows. Catalyzes the conversion of 3-deoxy-D-arabino-heptulosonate 7-phosphate (DAHP) to dehydroquinate (DHQ). The sequence is that of 3-dehydroquinate synthase from Chlorobium chlorochromatii (strain CaD3).